The sequence spans 1309 residues: Phospholipase A I (1309 aa).

LRR repeat units follow at residues 155 to 178 (LPLL…IGKL), 180 to 201 (NLKI…LRQC), 203 to 223 (GLVE…DFRA), and 224 to 248 (MAGL…PLHQ). 3 ARM repeats span residues 315–356 (DEGN…SLAR), 401–439 (SVSQ…NLAF), and 440–481 (CLEN…ILGE). Positions 502 to 746 (LTMDGGGMKG…VANNPTIFAI (245 aa)) constitute a PNPLA domain. Positions 506–511 (GGGMKG) match the GXGXXG motif. The short motif at 538 to 542 (GTSTG) is the GXSXG element. The active-site Nucleophile is the serine 540. The active-site Proton acceptor is the aspartate 733. The short motif at 733–735 (DGA) is the DGA/G element. The segment at 1183–1253 (VIGPSNEPQE…EDSDHEKTNR (71 aa)) is disordered. The segment covering 1188–1208 (NEPQETPLITSQGSSEYNIGD) has biased composition (polar residues). Residues 1216–1235 (GEEEDEDEEVNEETEREEME) show a composition bias toward acidic residues.

It belongs to the patatin family.

The protein localises to the plastid. It localises to the chloroplast. Its function is as follows. Possesses non-specific lipolytic acyl hydrolase (LAH) activity. Catalyzes the hydrolysis of the galactolipids monogalactosyldiacylglycerol (MGDG) and digalactosyldiacylglycerol (DGDG), and less efficiently the phoshpolipids phosphatidylcholine (PC), phosphatidylethanolamine (PE), phosphatidylglycerol (PG), phosphatidylserine (PS) and phosphatidylinositol (PI). Hydrolyzes phospholipids at both the sn-1 and sn-2 positions. Involved in basal jasmonic acid production and promotes resistance to the necrotrophic fungal pathogen Botrytis cinerea. This chain is Phospholipase A I (PLA1), found in Arabidopsis thaliana (Mouse-ear cress).